Reading from the N-terminus, the 216-residue chain is MQWTLVVPLKALARAKSRLADTAGDGLRPGLALAFAQDTVAAALASAAVRDVAVVTGDPVAGRELAALGARIVADEPAGGLNAALAHAAAVVRSGRPDSGVAALNADLPALRPAELARVLEAAVEFPRAFLPDAAAIGTTLLAAAPGRELLPAFGTDSRARHRASGAVELGLGGVNSVRQDVDTGADLRAALALGVGPRTAAAAARLLIPGPQGDR.

Residues Thr-139, Gly-155, and Ser-158 each contribute to the phosphoenolpyruvate site.

The protein belongs to the CofC family.

It carries out the reaction phosphoenolpyruvate + GTP + H(+) = enolpyruvoyl-2-diphospho-5'-guanosine + diphosphate. The protein operates within cofactor biosynthesis; coenzyme F420 biosynthesis. In terms of biological role, guanylyltransferase that catalyzes the activation of phosphoenolpyruvate (PEP) as enolpyruvoyl-2-diphospho-5'-guanosine, via the condensation of PEP with GTP. It is involved in the biosynthesis of coenzyme F420, a hydride carrier cofactor. This Streptomyces avermitilis (strain ATCC 31267 / DSM 46492 / JCM 5070 / NBRC 14893 / NCIMB 12804 / NRRL 8165 / MA-4680) protein is Phosphoenolpyruvate guanylyltransferase.